Here is a 492-residue protein sequence, read N- to C-terminus: Nuclear autoantigenic sperm protein homolog (492 aa).

Low complexity predominate over residues 1-14; that stretch reads MSAEAEAIVTTATA. Disordered stretches follow at residues 1–52 and 123–254; these read MSAE…EQER and DVPD…EEGV. A phosphothreonine mark is found at Thr32 and Thr33. A compositionally biased stretch (acidic residues) spans 124-145; the sequence is VPDEAADDDDEDVDDDEEESAE. Composition is skewed to basic and acidic residues over residues 147–159 and 170–179; these read GAAKKEEKKDTKE and KELDTIKEGS. Phosphoserine is present on residues Ser179 and Ser184. Phosphothreonine is present on Thr185. Ser193 bears the Phosphoserine mark. The segment covering 226–238 has biased composition (polar residues); sequence STSNGEVTASCSN. Over residues 244–253 the composition is skewed to acidic residues; that stretch reads VEEEPEEEEG. TPR repeat units follow at residues 284-317 and 326-359; these read AEVQTELANIEFENGILEAAREDYEKALKIHGEL and AELHYKIGLTYLMQQLNKEGATALRQSSVLIEEE. Residues 377–400 adopt a coiled-coil conformation; that stretch reads MLDLEETKQEILAKIQEIEEMQAQ. A compositionally biased stretch (low complexity) spans 418-459; it reads SGDAAAASSSSSSSANGAASSSSSSSKGAAAASSSTISSSSA. The disordered stretch occupies residues 418-492; it reads SGDAAAASSS…LCSPAKRAAV (75 aa). A phosphoserine mark is found at Ser478 and Ser485.

This sequence belongs to the NASP family. As to quaternary structure, interacts with the histone H3-H4 heterodimer; the interaction with H4 is probably indirect and mediated by H3 (His3, His3.3A and His3.3B). Interacts with His2Av; this interaction directly or indirectly destabilizes His2Av.

Its subcellular location is the cytoplasm. It localises to the nucleus. It is found in the perinuclear region. In terms of biological role, component of the histone chaperone network. Binds and stabilizes histone H3-H4 not bound to chromatin to maintain a soluble reservoir and modulate degradation by chaperone-mediated autophagy. May also bind and stabilize monomeric H3. Maternal effect gene essential for early embryogenesis. The sequence is that of Nuclear autoantigenic sperm protein homolog from Drosophila melanogaster (Fruit fly).